Consider the following 420-residue polypeptide: MKTLIARHKAGEHIGICSVCSAHPLVIEAALAFDRNSTRKVLIEATSNQVNQFGGYTGMTPADFREFVFTIADKVGFARERIILGGDHLGPNCWQQENADAAMEKSVELVKAYVRAGFSKIHLDASMSCAGDPIPLAPETVAERAAVLCFAAESVATDCQREQLSYVIGTEVPVPGGEASAIQSVHITHVEDAANTLRTHQKAFIARGLTEALTRVIAIVVQPGVEFDHSNIIHYQPQEAQALAQWIENTRMVYEAHSTDYQTRTAYWELVRDHFAILKVGPALTFALREAIFALAQIEQELIAPENRSGCLAVIEEVMLDEPQYWKKYYRTGFNDSLLDIRYSLSDRIRYYWPHSRIKNSVETMMVNLEGVDIPLGMISQYLPKQFERIQSGELSAIPHQLIMDKIYDVLRAYRYGCAE.

The protein belongs to the GatZ/KbaZ family. GatZ subfamily. Forms a complex with GatY.

Its pathway is carbohydrate metabolism; D-tagatose 6-phosphate degradation; D-glyceraldehyde 3-phosphate and glycerone phosphate from D-tagatose 6-phosphate: step 2/2. Its function is as follows. Component of the tagatose-1,6-bisphosphate aldolase GatYZ that is required for full activity and stability of the Y subunit. Could have a chaperone-like function for the proper and stable folding of GatY. When expressed alone, GatZ does not show any aldolase activity. Is involved in the catabolism of galactitol. The protein is D-tagatose-1,6-bisphosphate aldolase subunit GatZ of Shigella boydii serotype 18 (strain CDC 3083-94 / BS512).